The sequence spans 293 residues: Aspartate carbamoyltransferase catalytic subunit (293 aa).

2 residues coordinate carbamoyl phosphate: Arg-50 and Thr-51. Position 78 (Lys-78) interacts with L-aspartate. The carbamoyl phosphate site is built by Arg-100, His-127, and Gln-130. L-aspartate-binding residues include Arg-160 and Arg-210. Positions 253 and 254 each coordinate carbamoyl phosphate.

The protein belongs to the aspartate/ornithine carbamoyltransferase superfamily. ATCase family. Heterododecamer (2C3:3R2) of six catalytic PyrB chains organized as two trimers (C3), and six regulatory PyrI chains organized as three dimers (R2).

It carries out the reaction carbamoyl phosphate + L-aspartate = N-carbamoyl-L-aspartate + phosphate + H(+). It participates in pyrimidine metabolism; UMP biosynthesis via de novo pathway; (S)-dihydroorotate from bicarbonate: step 2/3. Its function is as follows. Catalyzes the condensation of carbamoyl phosphate and aspartate to form carbamoyl aspartate and inorganic phosphate, the committed step in the de novo pyrimidine nucleotide biosynthesis pathway. This Staphylococcus epidermidis (strain ATCC 12228 / FDA PCI 1200) protein is Aspartate carbamoyltransferase catalytic subunit.